The sequence spans 356 residues: GDP-mannose:di-myo-inositol-1,3'-phosphate beta-1,2-mannosyltransferase (356 aa).

The protein belongs to the MDIP synthase family. Mg(2+) serves as cofactor.

The enzyme catalyses bis(myo-inositol) 1,3'-phosphate + GDP-alpha-D-mannose = 2-O-(beta-D-mannosyl)-bis(myo-inositol) 1,3'-phosphate + GDP + H(+). It catalyses the reaction 2-O-(beta-D-mannosyl)-bis(myo-inositol) 1,3'-phosphate + GDP-alpha-D-mannose = 2-O-(beta-D-mannosyl-(1-&gt;2)-beta-D-mannosyl)-bis(myo-inositol) 1,3'-phosphate + GDP + H(+). It carries out the reaction bis(myo-inositol) 1,3'-phosphate + 2 GDP-alpha-D-mannose = 2-O-(beta-D-mannosyl-(1-&gt;2)-beta-D-mannosyl)-bis(myo-inositol) 1,3'-phosphate + 2 GDP + 2 H(+). Functionally, catalyzes the transfer of the mannosyl group from GDP-mannose to di-myo-inositol-1,3'-phosphate (DIP), producing mannosyl-di-myo-inositol phosphate (MDIP). Can also use MDIP as an acceptor of a second mannose residue, yielding di-mannosyl-di-myo-inositol phosphate (MMDIP). Minor amounts of the tri-mannosylated form are also formed. The protein is GDP-mannose:di-myo-inositol-1,3'-phosphate beta-1,2-mannosyltransferase of Thermotoga maritima (strain ATCC 43589 / DSM 3109 / JCM 10099 / NBRC 100826 / MSB8).